Consider the following 43-residue polypeptide: Protein PsbN (43 aa).

Residues 5–27 (TLVAISISGSLVSFTGYALYTAF) form a helical membrane-spanning segment.

This sequence belongs to the PsbN family.

The protein resides in the plastid. It is found in the chloroplast thylakoid membrane. Functionally, may play a role in photosystem I and II biogenesis. This Drimys granadensis protein is Protein PsbN.